Here is a 422-residue protein sequence, read N- to C-terminus: uncharacterized protein (422 aa).

The N-terminal stretch at 1–23 (MLSLIPFTVCAFLALITSKGGSA) is a signal peptide.

As to expression, component of the acid-insoluble organic matrix of the aragonitic skeleton (at protein level).

The protein resides in the secreted. This is an uncharacterized protein from Acropora millepora (Staghorn coral).